The following is a 411-amino-acid chain: Serine hydroxymethyltransferase (411 aa).

Residues Leu119 and 123 to 125 (GHL) contribute to the (6S)-5,6,7,8-tetrahydrofolate site. N6-(pyridoxal phosphate)lysine is present on Lys228. Residue 351 to 353 (SPF) participates in (6S)-5,6,7,8-tetrahydrofolate binding.

Belongs to the SHMT family. As to quaternary structure, homodimer. Pyridoxal 5'-phosphate serves as cofactor.

The protein localises to the cytoplasm. It carries out the reaction (6R)-5,10-methylene-5,6,7,8-tetrahydrofolate + glycine + H2O = (6S)-5,6,7,8-tetrahydrofolate + L-serine. Its pathway is one-carbon metabolism; tetrahydrofolate interconversion. The protein operates within amino-acid biosynthesis; glycine biosynthesis; glycine from L-serine: step 1/1. Its function is as follows. Catalyzes the reversible interconversion of serine and glycine with tetrahydrofolate (THF) serving as the one-carbon carrier. This reaction serves as the major source of one-carbon groups required for the biosynthesis of purines, thymidylate, methionine, and other important biomolecules. Also exhibits THF-independent aldolase activity toward beta-hydroxyamino acids, producing glycine and aldehydes, via a retro-aldol mechanism. The sequence is that of Serine hydroxymethyltransferase from Clostridium botulinum (strain Alaska E43 / Type E3).